Reading from the N-terminus, the 1147-residue chain is Protein efr3 (1147 aa).

Disordered regions lie at residues 582–615 (KVKE…SMSG), 877–929 (VHQN…ESPV), 942–1097 (EEGK…EPNA), and 1114–1147 (FLSP…RPPY). Basic and acidic residues predominate over residues 598–607 (DLSDPTERPG). Residues 883-897 (SSPSASSNASVPQSA) are compositionally biased toward low complexity. The segment covering 903 to 926 (GLQNAQRTSVPNSSGSQLISTSRE) has biased composition (polar residues). Over residues 959–978 (SNRSVISSSSDSMVSGYSLS) the composition is skewed to low complexity. Over residues 1057-1072 (SVTNGKAGTPSTSPGR) the composition is skewed to polar residues. The segment covering 1137–1147 (GVSGGLGRPPY) has biased composition (gly residues).

Belongs to the EFR3 family.

This Aspergillus oryzae (strain ATCC 42149 / RIB 40) (Yellow koji mold) protein is Protein efr3 (efr3).